The primary structure comprises 595 residues: Elongation factor 4 (595 aa).

The 182-residue stretch at 2–183 folds into the tr-type G domain; it reads KNIRNFCIIA…AIIERISPPT (182 aa). GTP-binding positions include 14–19 and 130–133; these read DHGKST and NKID.

This sequence belongs to the TRAFAC class translation factor GTPase superfamily. Classic translation factor GTPase family. LepA subfamily.

It localises to the cell inner membrane. The catalysed reaction is GTP + H2O = GDP + phosphate + H(+). Required for accurate and efficient protein synthesis under certain stress conditions. May act as a fidelity factor of the translation reaction, by catalyzing a one-codon backward translocation of tRNAs on improperly translocated ribosomes. Back-translocation proceeds from a post-translocation (POST) complex to a pre-translocation (PRE) complex, thus giving elongation factor G a second chance to translocate the tRNAs correctly. Binds to ribosomes in a GTP-dependent manner. This chain is Elongation factor 4, found in Amoebophilus asiaticus (strain 5a2).